Consider the following 262-residue polypeptide: MRRTLYRLMIELTNGRFTSYILRKFAQSRLSSIIIPSYAKVFQINQDEMEKGLKEYRTLHELFTRKLKEGKRSIDTDASSIVSPVDGVFADHGPIEDTKTFDIKGKRYSIVDMLGNEERAQRYAGGTYMVIYLSPSHYHRIHSPLSGSVTERFVLGRKSYPVNAAGMEYGKEPLSKNYRSVTEVNSDGEHMALVKVGAMFVNSIELLHERDTVQKGEEMAYFTFGSTVVLLFEKDMIEVVKELKSGQELRLGEKIATRLAHK.

Catalysis depends on charge relay system; for autoendoproteolytic cleavage activity residues aspartate 86, histidine 142, and serine 226. Serine 226 serves as the catalytic Schiff-base intermediate with substrate; via pyruvic acid; for decarboxylase activity. At serine 226 the chain carries Pyruvic acid (Ser); by autocatalysis.

This sequence belongs to the phosphatidylserine decarboxylase family. PSD-B subfamily. Prokaryotic type I sub-subfamily. Heterodimer of a large membrane-associated beta subunit and a small pyruvoyl-containing alpha subunit. Pyruvate serves as cofactor. In terms of processing, is synthesized initially as an inactive proenzyme. Formation of the active enzyme involves a self-maturation process in which the active site pyruvoyl group is generated from an internal serine residue via an autocatalytic post-translational modification. Two non-identical subunits are generated from the proenzyme in this reaction, and the pyruvate is formed at the N-terminus of the alpha chain, which is derived from the carboxyl end of the proenzyme. The autoendoproteolytic cleavage occurs by a canonical serine protease mechanism, in which the side chain hydroxyl group of the serine supplies its oxygen atom to form the C-terminus of the beta chain, while the remainder of the serine residue undergoes an oxidative deamination to produce ammonia and the pyruvoyl prosthetic group on the alpha chain. During this reaction, the Ser that is part of the protease active site of the proenzyme becomes the pyruvoyl prosthetic group, which constitutes an essential element of the active site of the mature decarboxylase.

The protein localises to the cell membrane. The catalysed reaction is a 1,2-diacyl-sn-glycero-3-phospho-L-serine + H(+) = a 1,2-diacyl-sn-glycero-3-phosphoethanolamine + CO2. It functions in the pathway phospholipid metabolism; phosphatidylethanolamine biosynthesis; phosphatidylethanolamine from CDP-diacylglycerol: step 2/2. Catalyzes the formation of phosphatidylethanolamine (PtdEtn) from phosphatidylserine (PtdSer). In Bacillus cereus (strain ZK / E33L), this protein is Phosphatidylserine decarboxylase proenzyme.